Here is a 175-residue protein sequence, read N- to C-terminus: Bifunctional protein PyrR (175 aa).

Residues 40 to 41, 102 to 110, Arg135, and Val159 each bind substrate; these read TR and DDVLYTGRT. The short motif at 98–110 is the PRPP-binding element; the sequence is VIIIDDVLYTGRT.

This sequence belongs to the purine/pyrimidine phosphoribosyltransferase family. PyrR subfamily. In terms of assembly, homodimer and homohexamer; in equilibrium.

It catalyses the reaction UMP + diphosphate = 5-phospho-alpha-D-ribose 1-diphosphate + uracil. In terms of biological role, regulates transcriptional attenuation of the pyrimidine nucleotide (pyr) operon by binding in a uridine-dependent manner to specific sites on pyr mRNA. This disrupts an antiterminator hairpin in the RNA and favors formation of a downstream transcription terminator, leading to a reduced expression of downstream genes. Also displays a weak uracil phosphoribosyltransferase activity which is not physiologically significant. The chain is Bifunctional protein PyrR from Staphylococcus aureus (strain MSSA476).